The sequence spans 170 residues: Ankyrin repeat-containing protein C105.02c (170 aa).

ANK repeat units follow at residues 46–76 (LGND…NLNN) and 81–116 (TGDT…DPLL). The segment at 150–170 (SADVVADDDDEEEGSGESDEE) is disordered. Residues 154-170 (VADDDDEEEGSGESDEE) are compositionally biased toward acidic residues.

The protein resides in the cytoplasm. Its subcellular location is the nucleus. In Schizosaccharomyces pombe (strain 972 / ATCC 24843) (Fission yeast), this protein is Ankyrin repeat-containing protein C105.02c.